Here is a 254-residue protein sequence, read N- to C-terminus: Persulfide dioxygenase ETHE1, mitochondrial (254 aa).

A mitochondrion-targeting transit peptide spans 1-7; that stretch reads MASAVVR. A phosphoserine mark is found at S14, S17, and S19. K32 carries the post-translational modification N6-acetyllysine; alternate. K32 bears the N6-succinyllysine; alternate mark. Position 66 is an N6-acetyllysine (K66). 3 residues coordinate Fe cation: H79, H135, and D154. Residue K172 is modified to N6-acetyllysine; alternate. K172 is subject to N6-succinyllysine; alternate.

This sequence belongs to the metallo-beta-lactamase superfamily. Glyoxalase II family. In terms of assembly, homodimer. Monomer. Interacts with TST. May interact with RELA. The cofactor is Fe(2+).

It localises to the cytoplasm. It is found in the nucleus. The protein localises to the mitochondrion matrix. It carries out the reaction S-sulfanylglutathione + O2 + H2O = sulfite + glutathione + 2 H(+). Its function is as follows. First described as a protein that can shuttle between the nucleus and the cytoplasm and suppress p53-induced apoptosis by sequestering the transcription factor RELA/NFKB3 in the cytoplasm and preventing its accumulation in the nucleus. Sulfur dioxygenase that plays an essential role in hydrogen sulfide catabolism in the mitochondrial matrix. Hydrogen sulfide (H(2)S) is first oxidized by SQRDL, giving rise to cysteine persulfide residues. ETHE1 consumes molecular oxygen to catalyze the oxidation of the persulfide, once it has been transferred to a thiophilic acceptor, such as glutathione (R-SSH). Plays an important role in metabolic homeostasis in mitochondria by metabolizing hydrogen sulfide and preventing the accumulation of supraphysiological H(2)S levels that have toxic effects, due to the inhibition of cytochrome c oxidase. This Mus musculus (Mouse) protein is Persulfide dioxygenase ETHE1, mitochondrial (Ethe1).